The chain runs to 288 residues: Elongation factor Ts (288 aa).

The tract at residues 82–85 (TDFV) is involved in Mg(2+) ion dislocation from EF-Tu.

The protein belongs to the EF-Ts family.

The protein localises to the cytoplasm. Functionally, associates with the EF-Tu.GDP complex and induces the exchange of GDP to GTP. It remains bound to the aminoacyl-tRNA.EF-Tu.GTP complex up to the GTP hydrolysis stage on the ribosome. In Pelodictyon phaeoclathratiforme (strain DSM 5477 / BU-1), this protein is Elongation factor Ts.